The primary structure comprises 364 residues: Phosphoserine aminotransferase (364 aa).

Position 46 (R46) interacts with L-glutamate. Pyridoxal 5'-phosphate-binding positions include 80-81 (AR), W106, T157, D176, and Q199. K200 carries the N6-(pyridoxal phosphate)lysine modification. Residue 241-242 (NT) participates in pyridoxal 5'-phosphate binding.

The protein belongs to the class-V pyridoxal-phosphate-dependent aminotransferase family. SerC subfamily. As to quaternary structure, homodimer. Requires pyridoxal 5'-phosphate as cofactor.

It is found in the cytoplasm. It carries out the reaction O-phospho-L-serine + 2-oxoglutarate = 3-phosphooxypyruvate + L-glutamate. The enzyme catalyses 4-(phosphooxy)-L-threonine + 2-oxoglutarate = (R)-3-hydroxy-2-oxo-4-phosphooxybutanoate + L-glutamate. It functions in the pathway amino-acid biosynthesis; L-serine biosynthesis; L-serine from 3-phospho-D-glycerate: step 2/3. It participates in cofactor biosynthesis; pyridoxine 5'-phosphate biosynthesis; pyridoxine 5'-phosphate from D-erythrose 4-phosphate: step 3/5. In terms of biological role, catalyzes the reversible conversion of 3-phosphohydroxypyruvate to phosphoserine and of 3-hydroxy-2-oxo-4-phosphonooxybutanoate to phosphohydroxythreonine. The sequence is that of Phosphoserine aminotransferase from Vibrio vulnificus (strain YJ016).